The primary structure comprises 64 residues: Large ribosomal subunit protein eL37 (64 aa).

Zn(2+) is bound by residues Cys-20, Cys-23, Cys-35, and Cys-38. The segment at 20-38 (CRRCGRRAFHVRKKVCAAC) adopts a C4-type zinc-finger fold.

The protein belongs to the eukaryotic ribosomal protein eL37 family. Zn(2+) is required as a cofactor.

Binds to the 23S rRNA. In Methanococcus maripaludis (strain C6 / ATCC BAA-1332), this protein is Large ribosomal subunit protein eL37.